The sequence spans 152 residues: Small ribosomal subunit protein uS13 (152 aa).

Residue Ser2 is modified to N-acetylserine. Lys91 is covalently cross-linked (Glycyl lysine isopeptide (Lys-Gly) (interchain with G-Cter in SUMO2)). Lys94 and Lys106 each carry N6-acetyllysine; alternate. Residues Lys94 and Lys106 each participate in a glycyl lysine isopeptide (Lys-Gly) (interchain with G-Cter in SUMO2); alternate cross-link.

It belongs to the universal ribosomal protein uS13 family. As to quaternary structure, component of the small ribosomal subunit.

The protein resides in the cytoplasm. Component of the small ribosomal subunit. The ribosome is a large ribonucleoprotein complex responsible for the synthesis of proteins in the cell. This chain is Small ribosomal subunit protein uS13 (RPS18), found in Homo sapiens (Human).